The chain runs to 525 residues: Frizzled-4 (525 aa).

A signal peptide spans 1–24; it reads MERRGGGGRMLALLLAGLLGGARG. Residues 25 to 200 lie on the Extracellular side of the membrane; sequence FGDEEERRCD…KCGYDAGLYS (176 aa). The FZ domain occupies 28-149; sequence EEERRCDAIR…NDHNHMCMEG (122 aa). Disulfide bonds link cysteine 33/cysteine 94, cysteine 41/cysteine 87, cysteine 78/cysteine 116, cysteine 105/cysteine 146, cysteine 109/cysteine 133, cysteine 169/cysteine 188, cysteine 192/cysteine 270, and cysteine 290/cysteine 365. Asparagine 47 carries an N-linked (GlcNAc...) asparagine glycan. Residue asparagine 132 is glycosylated (N-linked (GlcNAc...) asparagine). A helical membrane pass occupies residues 201–231; the sequence is RSAKEFTDIWMAVWASLCFISTAFTVLTFLI. At 232-237 the chain is on the cytoplasmic side; it reads DSSRFS. The helical transmembrane segment at 238-263 threads the bilayer; the sequence is YPERPIIFLSMCYNIYSIAYIVRLTV. Over 264–287 the chain is Extracellular; the sequence is GRERISCDFEEAAEPVLIQEGLKN. A helical transmembrane segment spans residues 288–321; the sequence is TGCAIIFLLMYFFGMASSIWWVILTLTWFLAAGL. The Cytoplasmic segment spans residues 322-324; sequence KWG. Residues 325 to 353 traverse the membrane as a helical segment; the sequence is HEAIEMHSSYFHIAAWAIPAVKTIVILIM. Topologically, residues 354 to 371 are extracellular; the sequence is RLVDADELTGLCYVGNQN. A helical transmembrane segment spans residues 372-406; that stretch reads LDALTGFVVAPLFTYLVIGTLFIAAGLVALFKIRS. At 407–419 the chain is on the cytoplasmic side; that stretch reads NLQKDGTKTDKLE. Residues 420 to 448 traverse the membrane as a helical segment; it reads RLMVKIGVFSVLYTVPATCVIACYFYEIS. At 449–461 the chain is on the extracellular side; the sequence is NWAVFRYSADDSN. A helical membrane pass occupies residues 462 to 483; the sequence is MAVEMLKIFMSLLVGITSGMWI. Topologically, residues 484-525 are cytoplasmic; it reads WSAKTLHTWQKCSNRLVNSGKVKREKRADGWVKPGKGNETVV. The short motif at 487–492 is the Lys-Thr-X-X-X-Trp motif, mediates interaction with the PDZ domain of Dvl family members element; sequence KTLHTW. The PDZ-binding signature appears at 523-525; that stretch reads TVV.

It belongs to the G-protein coupled receptor Fz/Smo family. In terms of assembly, interacts (via FZ domain) with TSKU; TSKU competes with WNT2B for binding to FZD4, inhibiting Wnt signaling and repressing peripheral eye development. Expressed in the developing kidney, interdigital spaces and optic cup.

It is found in the cell membrane. Receptor for Wnt proteins. Most frizzled receptors are coupled to the beta-catenin canonical signaling pathway, which leads to the activation of disheveled proteins, inhibition of GSK-3 kinase, nuclear accumulation of beta-catenin and activation of Wnt target genes. A second signaling pathway involving PKC and calcium fluxes has been seen for some family members, but it is not yet clear if it represents a distinct pathway or if it can be integrated in the canonical pathway, as PKC seems to be required for Wnt-mediated inactivation of GSK-3 kinase. Both pathways seem to involve interactions with G-proteins. May be involved in transduction and intercellular transmission of polarity information during tissue morphogenesis and/or in differentiated tissues. The chain is Frizzled-4 (FZD4) from Gallus gallus (Chicken).